Consider the following 287-residue polypeptide: ATP synthase gamma chain (287 aa).

The protein belongs to the ATPase gamma chain family. As to quaternary structure, F-type ATPases have 2 components, CF(1) - the catalytic core - and CF(0) - the membrane proton channel. CF(1) has five subunits: alpha(3), beta(3), gamma(1), delta(1), epsilon(1). CF(0) has three main subunits: a, b and c.

The protein resides in the cell inner membrane. Functionally, produces ATP from ADP in the presence of a proton gradient across the membrane. The gamma chain is believed to be important in regulating ATPase activity and the flow of protons through the CF(0) complex. The chain is ATP synthase gamma chain from Pectobacterium carotovorum subsp. carotovorum (strain PC1).